The primary structure comprises 204 residues: CASP-like protein 2U2 (204 aa).

Residues 1–36 lie on the Cytoplasmic side of the membrane; that stretch reads MGVLGGDAHVPIGSQVSPGSVVVTNNESFGHRKLLK. A helical membrane pass occupies residues 37–57; it reads GVDFLVRIKAFAFCLAVIVLL. Topologically, residues 58–84 are extracellular; the sequence is KNNVQTTVIAPGIVLQAKYNNTKAPVS. Asn77 carries an N-linked (GlcNAc...) asparagine glycan. Residues 85–105 form a helical membrane-spanning segment; sequence LLVLASICCGYAFLQAVVSLL. Residues 106 to 117 are Cytoplasmic-facing; sequence SFIRDKRVLNNT. Residues 118–138 traverse the membrane as a helical segment; that stretch reads VLAWLTFLLDQVLTYLLLGSA. Residues 139–170 lie on the Extracellular side of the membrane; that stretch reads AATAEAAYIAKRGEDKVQWKAVCGPFKRFCDH. The chain crosses the membrane as a helical span at residues 171-191; that stretch reads FAATVFLSFIAVIAFAVSAAI. At 192-204 the chain is on the cytoplasmic side; the sequence is SAYYLFRKSKGFK.

The protein belongs to the Casparian strip membrane proteins (CASP) family. Homodimer and heterodimers.

It localises to the cell membrane. The protein is CASP-like protein 2U2 of Selaginella moellendorffii (Spikemoss).